We begin with the raw amino-acid sequence, 98 residues long: Acylphosphatase (98 aa).

In terms of domain architecture, Acylphosphatase-like spans 12–98 (TYYVRVRGVV…ERRFERFQQQ (87 aa)). Catalysis depends on residues arginine 27 and asparagine 45.

The protein belongs to the acylphosphatase family.

It catalyses the reaction an acyl phosphate + H2O = a carboxylate + phosphate + H(+). In Burkholderia vietnamiensis (strain G4 / LMG 22486) (Burkholderia cepacia (strain R1808)), this protein is Acylphosphatase (acyP).